The sequence spans 508 residues: Photosystem II CP47 reaction center protein (508 aa).

6 helical membrane-spanning segments follow: residues Ala21–Ser36, Ile101–Trp115, Gly140–Phe156, Ile203–Ser218, Val237–Val252, and Thr457–Arg472.

The protein belongs to the PsbB/PsbC family. PsbB subfamily. PSII is composed of 1 copy each of membrane proteins PsbA, PsbB, PsbC, PsbD, PsbE, PsbF, PsbH, PsbI, PsbJ, PsbK, PsbL, PsbM, PsbT, PsbX, PsbY, PsbZ, Psb30/Ycf12, at least 3 peripheral proteins of the oxygen-evolving complex and a large number of cofactors. It forms dimeric complexes. Binds multiple chlorophylls. PSII binds additional chlorophylls, carotenoids and specific lipids. serves as cofactor.

It localises to the plastid. The protein localises to the chloroplast thylakoid membrane. Its function is as follows. One of the components of the core complex of photosystem II (PSII). It binds chlorophyll and helps catalyze the primary light-induced photochemical processes of PSII. PSII is a light-driven water:plastoquinone oxidoreductase, using light energy to abstract electrons from H(2)O, generating O(2) and a proton gradient subsequently used for ATP formation. The polypeptide is Photosystem II CP47 reaction center protein (Secale cereale (Rye)).